The following is a 494-amino-acid chain: Homeotic protein bicoid (494 aa).

3 disordered regions span residues 1–49 (MAQP…PPQF), 149–210 (RRRH…TAHM), and 263–293 (QQVHNHQQQLHHQGNHVPHQMQQQQQQAQQQ). Over residues 14–40 (PLPHTHTHPHPHSHPHPHSHPHPHHQH) the composition is skewed to basic residues. Positions 97 to 156 (PRRTRTTFTSSQIAELEQHFLQGRYLTAPRLADLSAKLALGTAQVKIWFKNRRRRHKIQS) form a DNA-binding region, homeobox. Over residues 154–163 (IQSDQHKDQS) the composition is skewed to basic and acidic residues. The RNA-binding stretch occupies residues 433-440 (RGAAFAKF).

The protein belongs to the paired homeobox family. Bicoid subfamily. Interacts with Bin1; in vitro and yeast cells. Interacts with bin3. In terms of tissue distribution, maternal expression is an anterior cap concentrated in the cortical cytoplasm. Its transcript is produced maternally and sequestered near the anterior pole of the mature oocyte. After egg deposition, it is translated into protein, which diffuses toward the posterior, forming a long-range anterior gradient.

It is found in the nucleus. In terms of biological role, segment polarity transcription factor that provides positional cues for the development of head and thoracic segments. Forms a protein concentration gradient that patterns the anterior-posterior axis during embryogenesis and promotes the expression of anterior gap genes, such as hunchback (hb), ocelliless (oc), and buttonhead (btd). Binds to regulatory DNA sequences containing a 5'-TAATCC-3' sequence motif. Also binds RNA. Interacts with Bin1 to repress transcription of bicoid target genes in the anterior tip of the embryo; a process known as retraction. The sequence is that of Homeotic protein bicoid from Drosophila melanogaster (Fruit fly).